We begin with the raw amino-acid sequence, 423 residues long: Putative RING-H2 finger protein ATL49 (423 aa).

Residues 43–63 traverse the membrane as a helical segment; that stretch reads ILLIIIILSIIFFISGLLHIL. Residues 126 to 168 form an RING-type; atypical zinc finger; the sequence is CPVCLCEFETEDKLRLLPKCSHAFHVECIDTWLLSHSTCPLCR. Disordered regions lie at residues 213-236 and 377-399; these read NNDS…DMDG and HRIP…KTPS. The span at 379 to 389 shows a compositional bias: basic and acidic residues; it reads IPPEESLKSEN.

It belongs to the RING-type zinc finger family. ATL subfamily.

Its subcellular location is the membrane. It catalyses the reaction S-ubiquitinyl-[E2 ubiquitin-conjugating enzyme]-L-cysteine + [acceptor protein]-L-lysine = [E2 ubiquitin-conjugating enzyme]-L-cysteine + N(6)-ubiquitinyl-[acceptor protein]-L-lysine.. It functions in the pathway protein modification; protein ubiquitination. Functionally, may be involved in female gametophyte development. This Arabidopsis thaliana (Mouse-ear cress) protein is Putative RING-H2 finger protein ATL49 (ATL49).